The sequence spans 318 residues: UDP-3-O-acylglucosamine N-acyltransferase (318 aa).

Residue His231 is the Proton acceptor of the active site.

This sequence belongs to the transferase hexapeptide repeat family. LpxD subfamily. Homotrimer.

The catalysed reaction is a UDP-3-O-[(3R)-3-hydroxyacyl]-alpha-D-glucosamine + a (3R)-hydroxyacyl-[ACP] = a UDP-2-N,3-O-bis[(3R)-3-hydroxyacyl]-alpha-D-glucosamine + holo-[ACP] + H(+). It participates in bacterial outer membrane biogenesis; LPS lipid A biosynthesis. In terms of biological role, catalyzes the N-acylation of UDP-3-O-acylglucosamine using 3-hydroxyacyl-ACP as the acyl donor. Is involved in the biosynthesis of lipid A, a phosphorylated glycolipid that anchors the lipopolysaccharide to the outer membrane of the cell. This Campylobacter jejuni subsp. doylei (strain ATCC BAA-1458 / RM4099 / 269.97) protein is UDP-3-O-acylglucosamine N-acyltransferase.